Here is a 161-residue protein sequence, read N- to C-terminus: Allophycocyanin beta chain (161 aa).

Asn71 carries the post-translational modification N4-methylasparagine. Cys81 provides a ligand contact to (2R,3E)-phycocyanobilin.

It belongs to the phycobiliprotein family. As to quaternary structure, heterodimer of an alpha and a beta chain. Contains one covalently linked phycocyanobilin chromophore.

The protein localises to the plastid. It is found in the chloroplast thylakoid membrane. Its function is as follows. Light-harvesting photosynthetic bile pigment-protein from the phycobiliprotein complex. Allophycocyanin has a maximum absorption at approximately 650 nanometers. This Porphyra purpurea (Red seaweed) protein is Allophycocyanin beta chain (apcB).